A 436-amino-acid chain; its full sequence is Lactonohydrolase oryL (436 aa).

A signal peptide spans 1 to 27 (MLSYTSHCLQALLGVASLPYRQYQAYS).

The protein belongs to the SMP-30/CGR1 family.

It participates in secondary metabolite biosynthesis. Its function is as follows. Lactonohydrolase; part of the gene cluster that mediates the biosynthesis of oryzines, natural products with an unusual maleidride backbone. The two subunits of the fungal fatty acid synthase oryfasA and oryfasB probably form octenoic acid. This fatty acid is most likely activated by the acyl-CoA ligase oryP to give octenyl-CoA before the citrate synthase-like protein oryE catalyzes condensation with oxaloacetate to form tricarboxylic acid. The next steps of the pathways are conjectural, but a favorite possible route has been proposed, beginning with decarboxylation and concomitant dehydration by the decarboxylase oryM, followed by tautomerization, which may lead to the production of a diene intermediate. Reduction of this diene intermediate could give the known metabolite piliformic acid. On the pathway to oryzine B and oryzine A, however, hydroxylation of the diene by the alpha-ketoglutarate-dependent dioxygenase oryG and lactonisation by the lactonohydrolases oryH or oryL could give oryzine B directly. Finally, enoyl reduction by the dehydrogenase oryD would then convert oryzine B into oryzine A. This Aspergillus oryzae (strain ATCC 42149 / RIB 40) (Yellow koji mold) protein is Lactonohydrolase oryL.